Consider the following 773-residue polypeptide: 4'-phosphopantetheine phosphatase (773 aa).

Ala-2 carries the post-translational modification N-acetylalanine. Positions Ala-2–Ala-402 are pantothenate kinase. Positions 196 and 199 each coordinate acetyl-CoA. At Tyr-320 the chain carries 3'-nitrotyrosine. Phosphoserine is present on residues Ser-393 and Ser-404. A 4'-phosphopantetheine phosphatase region spans residues Arg-403–Glu-773. The residue at position 406 (Thr-406) is a Phosphothreonine. The Mn(2+) site is built by Asp-623, Asn-624, and Asp-659. Residues Glu-724–Arg-728 carry the Subfamily II EGMGR motif motif.

In the N-terminal section; belongs to the type II pantothenate kinase family. This sequence in the C-terminal section; belongs to the damage-control phosphatase family. Phosphopantetheine phosphatase II subfamily. As to quaternary structure, homodimer. Interacts with PKM. Mn(2+) serves as cofactor. Requires Ni(2+) as cofactor. Widely expressed with high expression in the muscle. Expressed in the retina and lens epithelium, mainly in ganglion cell layer, outer plexiform layer and retinal pigment layer (at protein level).

The protein localises to the cytoplasm. The enzyme catalyses (R)-4'-phosphopantetheine + H2O = (R)-pantetheine + phosphate. It catalyses the reaction (R)-4'-phosphopantetheine sulfonate + H2O = (R)-pantetheine sulfonate + phosphate. The catalysed reaction is (R)-4'-phospho-S-sulfopantetheine + H2O = (R)-S-sulfopantetheine + phosphate. Activity is strongly promoted by Co(2+), Ni(2+), Mg(2+) and Mn(2+). Activity is inhibited by EDTA. Its function is as follows. Phosphatase which shows a preference for 4'-phosphopantetheine and its oxidatively damaged forms (sulfonate or S-sulfonate), providing strong indirect evidence that the phosphatase activity pre-empts damage in the coenzyme A (CoA) pathway. Hydrolyzing excess 4'-phosphopantetheine could constitute a directed overflow mechanism to prevent its oxidation to the S-sulfonate, sulfonate, or other forms. Hydrolyzing 4'-phosphopantetheine sulfonate or S-sulfonate would forestall their conversion to inactive forms of CoA and acyl carrier protein. May play a role in the physiological regulation of CoA intracellular levels. The sequence is that of 4'-phosphopantetheine phosphatase from Homo sapiens (Human).